Reading from the N-terminus, the 925-residue chain is Probable replication restart protein PriA (925 aa).

8 residues coordinate Zn(2+): Cys645, Cys648, Cys654, Cys657, Cys672, Cys675, Cys685, and Cys688.

It belongs to the helicase family. PriA subfamily. Interacts with DnaB (DR_0549). Component of the replication restart primosome. Zn(2+) serves as cofactor.

In terms of biological role, initiates the restart of stalled replication forks, which reloads the replicative helicase on sites other than the origin of replication. Recognizes abandoned replication forks and remodels them to uncover a helicase loading site. Promotes assembly of the primosome at these replication forks. Recognizes and binds DNA at stalled replication forks, also binds single-stranded (ss)DNA. The protein is Probable replication restart protein PriA of Deinococcus radiodurans (strain ATCC 13939 / DSM 20539 / JCM 16871 / CCUG 27074 / LMG 4051 / NBRC 15346 / NCIMB 9279 / VKM B-1422 / R1).